A 127-amino-acid chain; its full sequence is MAKLSNDELIEAFKELTLIELSDFVKKFEEVFEVTAAAPVAAAAAPGAAAPAEEVEEKTAFDVILEAAGDKKIQVIKEVRALTSLGLGEAKALVDGAPKAVLEGANKEAADKAKAQLEAAGATVTVK.

The protein belongs to the bacterial ribosomal protein bL12 family. Homodimer. Part of the ribosomal stalk of the 50S ribosomal subunit. Forms a multimeric L10(L12)X complex, where L10 forms an elongated spine to which 2 to 4 L12 dimers bind in a sequential fashion. Binds GTP-bound translation factors.

In terms of biological role, forms part of the ribosomal stalk which helps the ribosome interact with GTP-bound translation factors. Is thus essential for accurate translation. This Clavibacter michiganensis subsp. michiganensis (strain NCPPB 382) protein is Large ribosomal subunit protein bL12.